A 128-amino-acid polypeptide reads, in one-letter code: Diacylglycerol kinase (128 aa).

Residue Glu34 participates in a divalent metal cation binding. A run of 2 helical transmembrane segments spans residues 35–55 (SAFRQIVILALFCIVLASYLT) and 58–78 (FLEWGLLILPCFLSVVIELIN). The active-site Proton acceptor is Glu75. Residue Glu82 coordinates a divalent metal cation. The helical transmembrane segment at 108 to 128 (LIGLIFWAFIWGRYLLTLYFN) threads the bilayer.

It belongs to the bacterial diacylglycerol kinase family. Mg(2+) is required as a cofactor.

It localises to the cell inner membrane. It catalyses the reaction a 1,2-diacyl-sn-glycerol + ATP = a 1,2-diacyl-sn-glycero-3-phosphate + ADP + H(+). Catalyzes the ATP-dependent phosphorylation of sn-l,2-diacylglycerol (DAG) to phosphatidic acid. Involved in the recycling of diacylglycerol produced as a by-product during membrane-derived oligosaccharide (MDO) biosynthesis. In Helicobacter pylori (strain J99 / ATCC 700824) (Campylobacter pylori J99), this protein is Diacylglycerol kinase (dgkA).